We begin with the raw amino-acid sequence, 234 residues long: Leucyl/phenylalanyl-tRNA--protein transferase (234 aa).

It belongs to the L/F-transferase family.

It localises to the cytoplasm. It catalyses the reaction N-terminal L-lysyl-[protein] + L-leucyl-tRNA(Leu) = N-terminal L-leucyl-L-lysyl-[protein] + tRNA(Leu) + H(+). The catalysed reaction is N-terminal L-arginyl-[protein] + L-leucyl-tRNA(Leu) = N-terminal L-leucyl-L-arginyl-[protein] + tRNA(Leu) + H(+). The enzyme catalyses L-phenylalanyl-tRNA(Phe) + an N-terminal L-alpha-aminoacyl-[protein] = an N-terminal L-phenylalanyl-L-alpha-aminoacyl-[protein] + tRNA(Phe). In terms of biological role, functions in the N-end rule pathway of protein degradation where it conjugates Leu, Phe and, less efficiently, Met from aminoacyl-tRNAs to the N-termini of proteins containing an N-terminal arginine or lysine. The polypeptide is Leucyl/phenylalanyl-tRNA--protein transferase (Enterobacter sp. (strain 638)).